The primary structure comprises 166 residues: NADH-quinone oxidoreductase subunit A (166 aa).

3 consecutive transmembrane segments (helical) span residues 16 to 36 (FAVF…GAYF), 68 to 88 (FYLV…LYAW), and 98 to 118 (IGFI…FYLV). The disordered stretch occupies residues 141 to 166 (RYASSHPQDISQELSVAGSQQANESR).

It belongs to the complex I subunit 3 family. NDH-1 is composed of 13 different subunits. Subunits NuoA, H, J, K, L, M, N constitute the membrane sector of the complex.

Its subcellular location is the cell inner membrane. It catalyses the reaction a quinone + NADH + 5 H(+)(in) = a quinol + NAD(+) + 4 H(+)(out). In terms of biological role, NDH-1 shuttles electrons from NADH, via FMN and iron-sulfur (Fe-S) centers, to quinones in the respiratory chain. The immediate electron acceptor for the enzyme in this species is believed to be ubiquinone. Couples the redox reaction to proton translocation (for every two electrons transferred, four hydrogen ions are translocated across the cytoplasmic membrane), and thus conserves the redox energy in a proton gradient. In Yersinia pseudotuberculosis serotype IB (strain PB1/+), this protein is NADH-quinone oxidoreductase subunit A.